The chain runs to 233 residues: Large ribosomal subunit protein uL1 (233 aa).

This sequence belongs to the universal ribosomal protein uL1 family. In terms of assembly, part of the 50S ribosomal subunit.

In terms of biological role, binds directly to 23S rRNA. The L1 stalk is quite mobile in the ribosome, and is involved in E site tRNA release. Protein L1 is also a translational repressor protein, it controls the translation of the L11 operon by binding to its mRNA. This Geobacillus stearothermophilus (Bacillus stearothermophilus) protein is Large ribosomal subunit protein uL1.